Here is a 418-residue protein sequence, read N- to C-terminus: Transmembrane protease serine 11D (418 aa).

At 1 to 20 (MYRPARVTSTSRFLNPYVVC) the chain is on the cytoplasmic side. Residues 21–41 (FIVVAGVVILAVTIALLVYFL) form a helical; Signal-anchor for type II membrane protein membrane-spanning segment. The Extracellular segment spans residues 42–418 (AFDQKSYFYR…LDWIRQQTGI (377 aa)). In terms of domain architecture, SEA spans 46 to 163 (KSYFYRSSFQ…STEITSLTDQ (118 aa)). Residue N144 is glycosylated (N-linked (GlcNAc...) asparagine). 4 cysteine pairs are disulfide-bonded: C173–C292, C212–C228, C337–C353, and C364–C393. A Peptidase S1 domain is found at 187 to 417 (ILGGTEAEEG…YLDWIRQQTG (231 aa)). Catalysis depends on charge relay system residues H227 and D272. The Charge relay system role is filled by S368.

It belongs to the peptidase S1 family. In terms of assembly, monomer. In terms of tissue distribution, located in the cells of the submucosal serous glands of the bronchi and trachea.

It is found in the cell membrane. The protein localises to the secreted. Strongly inhibited by diisopropyl fluorophosphate, leupeptin, antipain, aprotinin, and soybean trypsin inhibitor, but hardly inhibited by secretory leukocyte protease inhibitor at 10 microM. Functionally, may play some biological role in the host defense system on the mucous membrane independently of or in cooperation with other substances in airway mucous or bronchial secretions. Plays a role in the proteolytic processing of ACE2. Proteolytically cleaves and activates the human coronavirus 229E (HCoV-229E) spike glycoprotein which facilitate virus-cell membrane fusions; spike proteins are synthesized and maintained in precursor intermediate folding states and proteolysis permits the refolding and energy release required to create stable virus-cell linkages and membrane coalescence. Preferentially cleaves the C-terminal side of arginine residues at the P1 position of certain peptides, cleaving Boc-Phe-Ser-Arg-4-methylcoumaryl-7-amide most efficiently and having an optimum pH of 8.6 with this substrate. The chain is Transmembrane protease serine 11D (TMPRSS11D) from Homo sapiens (Human).